The primary structure comprises 609 residues: Chaperone protein DnaK (609 aa).

Position 173 is a phosphothreonine; by autocatalysis (Thr-173). A disordered region spans residues 580 to 609 (QAAQGGGAEGQEPKKDNVVDADYEVVDDKK). The span at 598 to 609 (VDADYEVVDDKK) shows a compositional bias: acidic residues.

The protein belongs to the heat shock protein 70 family.

Functionally, acts as a chaperone. This chain is Chaperone protein DnaK, found in Brevibacillus brevis (strain 47 / JCM 6285 / NBRC 100599).